We begin with the raw amino-acid sequence, 225 residues long: Insulin-induced gene 2 protein (225 aa).

The Cytoplasmic portion of the chain corresponds to 1–28 (MAEGETESPGPKKCGPYISSVTSQSVNL). Residues 29-51 (MIRGVVLFFIGVFLALVLNLLQI) traverse the membrane as a helical segment. Residues 52–70 (QRNVTLFPPDVIASIFSSA) are Lumenal-facing. The helical transmembrane segment at 71–88 (WWVPPCCGTASAVIGLLY) threads the bilayer. Residues 89-103 (PCIDRHLGEPHKFKR) lie on the Cytoplasmic side of the membrane. A helical transmembrane segment spans residues 104-126 (EWSSVMRCVAVFVGINHASAKVD). Topologically, residues 127-129 (FDN) are lumenal. A helical membrane pass occupies residues 130–148 (NIQLSLTLAALSIGLWWTF). Over 149–153 (DRSRS) the chain is Cytoplasmic. Serine 151 is subject to Phosphoserine; by PCK1. The helical transmembrane segment at 154-175 (GFGLGVGIAFLATVVTQLLVYN) threads the bilayer. Residues 176–189 (GVYQYTSPDFLYVR) are Lumenal-facing. The helical transmembrane segment at 190–207 (SWLPCIFFAGGITMGNIG) threads the bilayer. The Cytoplasmic segment spans residues 208–225 (RQLAMYECKVIAEKSHQE). Cysteine 215 is subject to Cysteine sulfenic acid (-SOH); alternate. Cysteine 215 is covalently cross-linked (Glycyl cysteine thioester (Cys-Gly) (interchain with G-Cter in ubiquitin); alternate). The KxHxx signature appears at 219–225 (AEKSHQE).

This sequence belongs to the INSIG family. In terms of assembly, interacts with SCAP; interaction is direct and only takes place in the presence of sterols; it prevents interaction between SCAP and the coat protein complex II (COPII). Associates with the SCAP-SREBP complex (composed of SCAP and SREBF1/SREBP1 or SREBF2/SREBP2); association is mediated via its interaction with SCAP and only takes place in the presence of sterols. Interacts with RNF139. Interacts with RNF145. Phosphorylation at Ser-151 by PCK1 reduces binding to oxysterol, disrupting the interaction between INSIG2 and SCAP, thereby promoting nuclear translocation of SREBP proteins (SREBF1/SREBP1 or SREBF2/SREBP2) and subsequent transcription of downstream lipogenesis-related genes. Post-translationally, polyubiquitinated by AMFR/gp78 at Cys-215 in some tissues such as adipose tissues, undifferentiated myoblasts and liver, leading to its degradation. In differentiated myotubes, Cys-215 oxidation prevents ubiquitination at the same site, resulting in protein stabilization. In terms of processing, oxidized at Cys-215 in differentiated myotubes, preventing ubiquitination at the same site, and resulting in protein stabilization.

The protein resides in the endoplasmic reticulum membrane. In terms of biological role, oxysterol-binding protein that mediates feedback control of cholesterol synthesis by controlling both endoplasmic reticulum to Golgi transport of SCAP and degradation of HMGCR. Acts as a negative regulator of cholesterol biosynthesis by mediating the retention of the SCAP-SREBP complex in the endoplasmic reticulum, thereby blocking the processing of sterol regulatory element-binding proteins (SREBPs) SREBF1/SREBP1 and SREBF2/SREBP2. Binds oxysterol, including 22-hydroxycholesterol, 24-hydroxycholesterol, 25-hydroxycholesterol and 27-hydroxycholesterol, regulating interaction with SCAP and retention of the SCAP-SREBP complex in the endoplasmic reticulum. In presence of oxysterol, interacts with SCAP, retaining the SCAP-SREBP complex in the endoplasmic reticulum, thereby preventing SCAP from escorting SREBF1/SREBP1 and SREBF2/SREBP2 to the Golgi. Sterol deprivation or phosphorylation by PCK1 reduce oxysterol-binding, disrupting the interaction between INSIG2 and SCAP, thereby promoting Golgi transport of the SCAP-SREBP complex, followed by processing and nuclear translocation of SREBF1/SREBP1 and SREBF2/SREBP2. Also regulates cholesterol synthesis by regulating degradation of HMGCR: initiates the sterol-mediated ubiquitin-mediated endoplasmic reticulum-associated degradation (ERAD) of HMGCR via recruitment of the reductase to the ubiquitin ligase RNF139. In Homo sapiens (Human), this protein is Insulin-induced gene 2 protein.